A 701-amino-acid polypeptide reads, in one-letter code: Translation initiation factor IF-2 (701 aa).

A compositionally biased stretch (basic and acidic residues) spans 48–62; it reads KIYKPEKAEQSEKSQ. Residues 48-123 form a disordered region; the sequence is KIYKPEKAEQ…EPKEMPSKIT (76 aa). Composition is skewed to low complexity over residues 63–89 and 97–109; these read QKNTQNKQQTTHNKGNQSNKGNQNNKP and NNKNNKNNKNNKQ. Basic and acidic residues predominate over residues 110 to 119; it reads PKQEEPKEMP. A tr-type G domain is found at 203-372; sequence ERPAVVTIMG…VLTSEVQELK (170 aa). The interval 212-219 is G1; it reads GHVDHGKT. GTP is bound at residue 212–219; sequence GHVDHGKT. Residues 237–241 are G2; that stretch reads GITQH. Residues 258–261 form a G3 region; it reads DTPG. GTP contacts are provided by residues 258–262 and 312–315; these read DTPGH and NKID. Residues 312 to 315 form a G4 region; that stretch reads NKID. The G5 stretch occupies residues 348–350; sequence SAL.

The protein belongs to the TRAFAC class translation factor GTPase superfamily. Classic translation factor GTPase family. IF-2 subfamily.

The protein resides in the cytoplasm. In terms of biological role, one of the essential components for the initiation of protein synthesis. Protects formylmethionyl-tRNA from spontaneous hydrolysis and promotes its binding to the 30S ribosomal subunits. Also involved in the hydrolysis of GTP during the formation of the 70S ribosomal complex. This chain is Translation initiation factor IF-2, found in Staphylococcus saprophyticus subsp. saprophyticus (strain ATCC 15305 / DSM 20229 / NCIMB 8711 / NCTC 7292 / S-41).